The chain runs to 1238 residues: DNA-directed RNA polymerase subunit beta (1238 aa).

A disordered region spans residues 1187 to 1238 (EGREDTPPEEVYEESYEEGFEEEIEELPEDIDFEPDSFDIENDDLDLEDFDI). A compositionally biased stretch (acidic residues) spans 1193–1238 (PPEEVYEESYEEGFEEEIEELPEDIDFEPDSFDIENDDLDLEDFDI).

Belongs to the RNA polymerase beta chain family. As to quaternary structure, the RNAP catalytic core consists of 2 alpha, 1 beta, 1 beta' and 1 omega subunit. When a sigma factor is associated with the core the holoenzyme is formed, which can initiate transcription.

The catalysed reaction is RNA(n) + a ribonucleoside 5'-triphosphate = RNA(n+1) + diphosphate. DNA-dependent RNA polymerase catalyzes the transcription of DNA into RNA using the four ribonucleoside triphosphates as substrates. This Thermoanaerobacter pseudethanolicus (strain ATCC 33223 / 39E) (Clostridium thermohydrosulfuricum) protein is DNA-directed RNA polymerase subunit beta.